The primary structure comprises 280 residues: Large ribosomal subunit protein uL2 (280 aa).

Disordered stretches follow at residues 33 to 55 (LTEG…RRRG) and 224 to 266 (AMNP…KASQ). A compositionally biased stretch (basic residues) spans 256–266 (TRTRNKNKASQ).

Belongs to the universal ribosomal protein uL2 family. As to quaternary structure, part of the 50S ribosomal subunit. Forms a bridge to the 30S subunit in the 70S ribosome.

In terms of biological role, one of the primary rRNA binding proteins. Required for association of the 30S and 50S subunits to form the 70S ribosome, for tRNA binding and peptide bond formation. It has been suggested to have peptidyltransferase activity; this is somewhat controversial. Makes several contacts with the 16S rRNA in the 70S ribosome. The sequence is that of Large ribosomal subunit protein uL2 from Ruegeria pomeroyi (strain ATCC 700808 / DSM 15171 / DSS-3) (Silicibacter pomeroyi).